Here is a 496-residue protein sequence, read N- to C-terminus: Cobyric acid synthase (496 aa).

The region spanning 256–444 (KINIAVVLLR…IHGILDNQAF (189 aa)) is the GATase cobBQ-type domain. Cys-337 acts as the Nucleophile in catalysis. The active site involves His-436.

Belongs to the CobB/CobQ family. CobQ subfamily.

The protein operates within cofactor biosynthesis; adenosylcobalamin biosynthesis. Its function is as follows. Catalyzes amidations at positions B, D, E, and G on adenosylcobyrinic A,C-diamide. NH(2) groups are provided by glutamine, and one molecule of ATP is hydrogenolyzed for each amidation. The protein is Cobyric acid synthase of Phocaeicola vulgatus (strain ATCC 8482 / DSM 1447 / JCM 5826 / CCUG 4940 / NBRC 14291 / NCTC 11154) (Bacteroides vulgatus).